We begin with the raw amino-acid sequence, 215 residues long: Peptide methionine sulfoxide reductase MsrA (215 aa).

C58 is a catalytic residue.

This sequence belongs to the MsrA Met sulfoxide reductase family.

It carries out the reaction L-methionyl-[protein] + [thioredoxin]-disulfide + H2O = L-methionyl-(S)-S-oxide-[protein] + [thioredoxin]-dithiol. It catalyses the reaction [thioredoxin]-disulfide + L-methionine + H2O = L-methionine (S)-S-oxide + [thioredoxin]-dithiol. Has an important function as a repair enzyme for proteins that have been inactivated by oxidation. Catalyzes the reversible oxidation-reduction of methionine sulfoxide in proteins to methionine. The polypeptide is Peptide methionine sulfoxide reductase MsrA (Pseudomonas savastanoi pv. phaseolicola (strain 1448A / Race 6) (Pseudomonas syringae pv. phaseolicola (strain 1448A / Race 6))).